Reading from the N-terminus, the 690-residue chain is Methionine--tRNA ligase (690 aa).

A 'HIGH' region motif is present at residues Pro12–His22. Zn(2+) is bound by residues Cys143, Cys146, Cys156, and Cys159. Positions Lys328 to Ser332 match the 'KMSKS' region motif. ATP is bound at residue Lys331. Residues Asp582 to Lys690 form the tRNA-binding domain.

This sequence belongs to the class-I aminoacyl-tRNA synthetase family. MetG type 1 subfamily. Homodimer. Zn(2+) serves as cofactor.

The protein resides in the cytoplasm. It catalyses the reaction tRNA(Met) + L-methionine + ATP = L-methionyl-tRNA(Met) + AMP + diphosphate. Is required not only for elongation of protein synthesis but also for the initiation of all mRNA translation through initiator tRNA(fMet) aminoacylation. The sequence is that of Methionine--tRNA ligase from Thiobacillus denitrificans (strain ATCC 25259 / T1).